The chain runs to 190 residues: Peptidyl-tRNA hydrolase (190 aa).

Residue Tyr-14 participates in tRNA binding. His-19 (proton acceptor) is an active-site residue. TRNA-binding residues include Tyr-64, Asn-66, and Asn-113.

The protein belongs to the PTH family. In terms of assembly, monomer.

It localises to the cytoplasm. The catalysed reaction is an N-acyl-L-alpha-aminoacyl-tRNA + H2O = an N-acyl-L-amino acid + a tRNA + H(+). In terms of biological role, hydrolyzes ribosome-free peptidyl-tRNAs (with 1 or more amino acids incorporated), which drop off the ribosome during protein synthesis, or as a result of ribosome stalling. Catalyzes the release of premature peptidyl moieties from peptidyl-tRNA molecules trapped in stalled 50S ribosomal subunits, and thus maintains levels of free tRNAs and 50S ribosomes. In Gemmatimonas aurantiaca (strain DSM 14586 / JCM 11422 / NBRC 100505 / T-27), this protein is Peptidyl-tRNA hydrolase.